Reading from the N-terminus, the 154-residue chain is Transcriptional repressor NrdR (154 aa).

A zinc finger lies at 3 to 34 (CPFCRHPDSRVVDSRETDEGQAIRRRRSCPEC). Residues 46–136 (LAVVKRSGVT…VYRSFSSAED (91 aa)) form the ATP-cone domain.

The protein belongs to the NrdR family. Zn(2+) is required as a cofactor.

Negatively regulates transcription of bacterial ribonucleotide reductase nrd genes and operons by binding to NrdR-boxes. This is Transcriptional repressor NrdR from Mycolicibacterium gilvum (strain PYR-GCK) (Mycobacterium gilvum (strain PYR-GCK)).